The chain runs to 356 residues: Peptide chain release factor 1 (356 aa).

An N5-methylglutamine modification is found at Q233.

Belongs to the prokaryotic/mitochondrial release factor family. Methylated by PrmC. Methylation increases the termination efficiency of RF1.

The protein resides in the cytoplasm. Its function is as follows. Peptide chain release factor 1 directs the termination of translation in response to the peptide chain termination codons UAG and UAA. The polypeptide is Peptide chain release factor 1 (Endomicrobium trichonymphae).